Reading from the N-terminus, the 637-residue chain is tRNA uridine 5-carboxymethylaminomethyl modification enzyme MnmG (637 aa).

Residues 15–20 (GAGHAG), Val127, and Ser182 each bind FAD. 274-288 (GPRYCPSIEDKVVRF) contacts NAD(+). Gln371 lines the FAD pocket.

It belongs to the MnmG family. Homodimer. Heterotetramer of two MnmE and two MnmG subunits. Requires FAD as cofactor.

The protein resides in the cytoplasm. NAD-binding protein involved in the addition of a carboxymethylaminomethyl (cmnm) group at the wobble position (U34) of certain tRNAs, forming tRNA-cmnm(5)s(2)U34. The polypeptide is tRNA uridine 5-carboxymethylaminomethyl modification enzyme MnmG (Heliobacterium modesticaldum (strain ATCC 51547 / Ice1)).